Reading from the N-terminus, the 946-residue chain is Probable inactive ATP-dependent zinc metalloprotease FTSHI 1, chloroplastic (946 aa).

The N-terminal 54 residues, 1-54 (MASIDNVFSLGTRFSIPENPKRSILKHATTSSFSARTQTRWRAPILRRSFTVLC), are a transit peptide targeting the chloroplast. Transmembrane regions (helical) follow at residues 289-309 (AVIA…VFAV), 320-340 (VVWP…LGVL), and 369-389 (VASS…MVLL). Residue 470–477 (GPPGCGKT) participates in ATP binding.

The protein in the N-terminal section; belongs to the AAA ATPase family. In the C-terminal section; belongs to the peptidase M41 family. In terms of assembly, oligomer.

The protein resides in the plastid. The protein localises to the chloroplast inner membrane. In terms of biological role, functions in chloroplast biogenesis and chloroplast division. Required for plastid development during embryogenesis. Might be involved in chaperone functions or play a structural role in the thylakoid FtsH complex. The polypeptide is Probable inactive ATP-dependent zinc metalloprotease FTSHI 1, chloroplastic (Arabidopsis thaliana (Mouse-ear cress)).